The following is a 1138-amino-acid chain: Pesticidal crystal protein Cry7Aa (1138 aa).

It belongs to the delta endotoxin family.

Functionally, promotes colloidosmotic lysis by binding to the midgut epithelial cells of Coleoptera. This protein is not toxic in its natural form. It is highly toxic to Colorado potato beetle larvae after an in vitro solubilization and trypsin activation step. In Bacillus thuringiensis, this protein is Pesticidal crystal protein Cry7Aa (cry7Aa).